Reading from the N-terminus, the 253-residue chain is Isopentenyl-diphosphate delta-isomerase IDI1 (253 aa).

Residue K61 coordinates substrate. The Mg(2+) site is built by H65 and H76. A Nudix hydrolase domain is found at 74-224 (LLHRAFSVFL…SLVFTPWFKL (151 aa)). Residues Q94 and K99 each contribute to the substrate site. The active site involves C111. S112 provides a ligand contact to substrate. The short motif at 112–145 (SHPLHIPTETGSTLEDSIAGVKRAAQRKLEHELG) is the Nudix box element. E174 and E176 together coordinate Mg(2+). Residue E176 is part of the active site.

This sequence belongs to the IPP isomerase type 1 family. Requires Mg(2+) as cofactor.

It catalyses the reaction isopentenyl diphosphate = dimethylallyl diphosphate. It functions in the pathway isoprenoid biosynthesis; dimethylallyl diphosphate biosynthesis; dimethylallyl diphosphate from isopentenyl diphosphate: step 1/1. Its function is as follows. Isopentenyl-diphosphate delta-isomerase; part of the second module of ergosterol biosynthesis pathway that includes the middle steps of the pathway. IDI1 catalyzes the 1,3-allylic rearrangement of isopentenyl (IPP) to its highly electrophilic allylic isomer, dimethylallyl diphosphate (DMAPP). The second module is carried out in the vacuole and involves the formation of farnesyl diphosphate, which is also an important intermediate in the biosynthesis of ubiquinone, dolichol, heme and prenylated proteins. Activity by the mevalonate kinase ERG12 (FG05912) first converts mevalonate into 5-phosphomevalonate. 5-phosphomevalonate is then further converted to 5-diphosphomevalonate by the phosphomevalonate kinase ERG8 (FG09764). The diphosphomevalonate decarboxylase ERG19 (FG10424) then produces isopentenyl diphosphate. The isopentenyl-diphosphate delta-isomerase IDI1 (FG09722) then catalyzes the 1,3-allylic rearrangement of the homoallylic substrate isopentenyl (IPP) to its highly electrophilic allylic isomer, dimethylallyl diphosphate (DMAPP). Finally the farnesyl diphosphate synthase ERG20 (FG06784) catalyzes the sequential condensation of isopentenyl pyrophosphate with dimethylallyl pyrophosphate, and then with the resultant geranylpyrophosphate to the ultimate product farnesyl pyrophosphate. The chain is Isopentenyl-diphosphate delta-isomerase IDI1 from Gibberella zeae (strain ATCC MYA-4620 / CBS 123657 / FGSC 9075 / NRRL 31084 / PH-1) (Wheat head blight fungus).